We begin with the raw amino-acid sequence, 342 residues long: Holliday junction branch migration complex subunit RuvB (342 aa).

The tract at residues methionine 1–tyrosine 179 is large ATPase domain (RuvB-L). Residues isoleucine 18, arginine 19, glycine 60, lysine 63, threonine 64, threonine 65, glutamate 126–phenylalanine 128, arginine 169, tyrosine 179, and arginine 216 contribute to the ATP site. Threonine 64 is a binding site for Mg(2+). The interval asparagine 180–threonine 250 is small ATPAse domain (RuvB-S). Residues serine 253 to glutamate 342 form a head domain (RuvB-H) region. 3 residues coordinate DNA: arginine 289, arginine 308, and arginine 313.

It belongs to the RuvB family. Homohexamer. Forms an RuvA(8)-RuvB(12)-Holliday junction (HJ) complex. HJ DNA is sandwiched between 2 RuvA tetramers; dsDNA enters through RuvA and exits via RuvB. An RuvB hexamer assembles on each DNA strand where it exits the tetramer. Each RuvB hexamer is contacted by two RuvA subunits (via domain III) on 2 adjacent RuvB subunits; this complex drives branch migration. In the full resolvosome a probable DNA-RuvA(4)-RuvB(12)-RuvC(2) complex forms which resolves the HJ.

Its subcellular location is the cytoplasm. It catalyses the reaction ATP + H2O = ADP + phosphate + H(+). Participates in UV-tolerance of Synechocystis PCC 6803. In terms of biological role, the RuvA-RuvB-RuvC complex processes Holliday junction (HJ) DNA during genetic recombination and DNA repair, while the RuvA-RuvB complex plays an important role in the rescue of blocked DNA replication forks via replication fork reversal (RFR). RuvA specifically binds to HJ cruciform DNA, conferring on it an open structure. The RuvB hexamer acts as an ATP-dependent pump, pulling dsDNA into and through the RuvAB complex. RuvB forms 2 homohexamers on either side of HJ DNA bound by 1 or 2 RuvA tetramers; 4 subunits per hexamer contact DNA at a time. Coordinated motions by a converter formed by DNA-disengaged RuvB subunits stimulates ATP hydrolysis and nucleotide exchange. Immobilization of the converter enables RuvB to convert the ATP-contained energy into a lever motion, pulling 2 nucleotides of DNA out of the RuvA tetramer per ATP hydrolyzed, thus driving DNA branch migration. The RuvB motors rotate together with the DNA substrate, which together with the progressing nucleotide cycle form the mechanistic basis for DNA recombination by continuous HJ branch migration. Branch migration allows RuvC to scan DNA until it finds its consensus sequence, where it cleaves and resolves cruciform DNA. In Rickettsia prowazekii (strain Madrid E), this protein is Holliday junction branch migration complex subunit RuvB.